The primary structure comprises 502 residues: ATP synthase subunit alpha (502 aa).

ATP is bound at residue 169 to 176; sequence GDRQTGKT.

Belongs to the ATPase alpha/beta chains family. As to quaternary structure, F-type ATPases have 2 components, CF(1) - the catalytic core - and CF(0) - the membrane proton channel. CF(1) has five subunits: alpha(3), beta(3), gamma(1), delta(1), epsilon(1). CF(0) has three main subunits: a(1), b(2) and c(9-12). The alpha and beta chains form an alternating ring which encloses part of the gamma chain. CF(1) is attached to CF(0) by a central stalk formed by the gamma and epsilon chains, while a peripheral stalk is formed by the delta and b chains.

Its subcellular location is the cell membrane. The catalysed reaction is ATP + H2O + 4 H(+)(in) = ADP + phosphate + 5 H(+)(out). Produces ATP from ADP in the presence of a proton gradient across the membrane. The alpha chain is a regulatory subunit. The chain is ATP synthase subunit alpha from Exiguobacterium sp. (strain ATCC BAA-1283 / AT1b).